The following is a 591-amino-acid chain: Aspartate--tRNA(Asp/Asn) ligase (591 aa).

Glutamate 174 contributes to the L-aspartate binding site. Residues 198–201 (QLFK) are aspartate. Arginine 220 is a binding site for L-aspartate. Residues 220-222 (RDE) and glutamine 229 each bind ATP. Histidine 450 contributes to the L-aspartate binding site. Glutamate 483 serves as a coordination point for ATP. Arginine 490 lines the L-aspartate pocket. 535 to 538 (GLDR) serves as a coordination point for ATP.

Belongs to the class-II aminoacyl-tRNA synthetase family. Type 1 subfamily. As to quaternary structure, homodimer.

The protein resides in the cytoplasm. The catalysed reaction is tRNA(Asx) + L-aspartate + ATP = L-aspartyl-tRNA(Asx) + AMP + diphosphate. Aspartyl-tRNA synthetase with relaxed tRNA specificity since it is able to aspartylate not only its cognate tRNA(Asp) but also tRNA(Asn). Reaction proceeds in two steps: L-aspartate is first activated by ATP to form Asp-AMP and then transferred to the acceptor end of tRNA(Asp/Asn). The chain is Aspartate--tRNA(Asp/Asn) ligase from Pseudomonas syringae pv. syringae (strain B728a).